Consider the following 211-residue polypeptide: WAP four-disulfide core domain protein 1 (211 aa).

The first 23 residues, 1–23, serve as a signal peptide directing secretion; the sequence is MGNCGRKVLRALSFLLLLGSSSA. The 50-residue stretch at 50-99 folds into the WAP domain; sequence RQPHADRCPPPPRTLPPGACQATRCQADSECPRHRRCCYNGCAYACLEAV. 4 cysteine pairs are disulfide-bonded: Cys-57–Cys-87, Cys-69–Cys-91, Cys-74–Cys-86, and Cys-80–Cys-95. The segment covering 182-198 has biased composition (basic and acidic residues); the sequence is VLRQRLHKEYPEGDSKN. A disordered region spans residues 182 to 211; it reads VLRQRLHKEYPEGDSKNVAEPGKGQQRHFP.

It localises to the secreted. Its function is as follows. Has growth inhibitory activity. The polypeptide is WAP four-disulfide core domain protein 1 (Wfdc1) (Mus musculus (Mouse)).